Reading from the N-terminus, the 291-residue chain is ATP synthase gamma chain (291 aa).

The protein belongs to the ATPase gamma chain family. In terms of assembly, F-type ATPases have 2 components, CF(1) - the catalytic core - and CF(0) - the membrane proton channel. CF(1) has five subunits: alpha(3), beta(3), gamma(1), delta(1), epsilon(1). CF(0) has three main subunits: a, b and c.

The protein localises to the cell inner membrane. Its function is as follows. Produces ATP from ADP in the presence of a proton gradient across the membrane. The gamma chain is believed to be important in regulating ATPase activity and the flow of protons through the CF(0) complex. The protein is ATP synthase gamma chain of Persephonella marina (strain DSM 14350 / EX-H1).